Reading from the N-terminus, the 98-residue chain is NADH-ubiquinone oxidoreductase chain 4L (98 aa).

3 helical membrane passes run 1-21 (MPYI…GMLI), 29-49 (SLLC…LTIL), and 61-81 (IILL…LVMV).

Belongs to the complex I subunit 4L family. As to quaternary structure, core subunit of respiratory chain NADH dehydrogenase (Complex I) which is composed of 45 different subunits.

It is found in the mitochondrion inner membrane. It carries out the reaction a ubiquinone + NADH + 5 H(+)(in) = a ubiquinol + NAD(+) + 4 H(+)(out). In terms of biological role, core subunit of the mitochondrial membrane respiratory chain NADH dehydrogenase (Complex I) which catalyzes electron transfer from NADH through the respiratory chain, using ubiquinone as an electron acceptor. Part of the enzyme membrane arm which is embedded in the lipid bilayer and involved in proton translocation. The polypeptide is NADH-ubiquinone oxidoreductase chain 4L (MT-ND4L) (Cephalopachus bancanus (Western tarsier)).